The primary structure comprises 82 residues: Putative membrane protein insertion efficiency factor (82 aa).

Belongs to the UPF0161 family.

The protein resides in the cell inner membrane. Could be involved in insertion of integral membrane proteins into the membrane. The protein is Putative membrane protein insertion efficiency factor of Rickettsia rickettsii (strain Iowa).